A 765-amino-acid polypeptide reads, in one-letter code: Proton-coupled zinc antiporter SLC30A5 (765 aa).

The residue at position 1 (Met-1) is an N-acetylmethionine. Residues 1–32 (MEEKYGGDVLAGPGGGGGLGPVDVPSARLTKY) are Cytoplasmic-facing. A helical transmembrane segment spans residues 33–53 (IVLLCFTKFLKAVGLFESYDL). Residues 54 to 56 (LKA) are Lumenal-facing. The chain crosses the membrane as a helical span at residues 57–77 (VHIVQFIFILKLGTAFFMVLF). At 78-98 (QKPFSSGKTITKHQWIKIFKH) the chain is on the cytoplasmic side. A helical membrane pass occupies residues 99 to 119 (AVAGCIISLLWFFGLTLCGPL). Residue Arg-120 is a topological domain, lumenal. The chain crosses the membrane as a helical span at residues 121 to 141 (TLLLFEHSDIVVISLLSVLFT). The Cytoplasmic segment spans residues 142 to 152 (SSGGGPAKTRG). The helical transmembrane segment at 153-173 (AAFFIIAVICLLLFDNDDLMA) threads the bilayer. The Lumenal segment spans residues 174–193 (KMAEHPEGHHDSALTHMLYT). A helical membrane pass occupies residues 194–214 (AIAFLGVADHKGGVLLLVLAL). Residues 215 to 238 (CCKVGFHTASRKLSVDVGGAKRLQ) are Cytoplasmic-facing. A helical membrane pass occupies residues 239 to 259 (ALSHLVSVLLLCPWVIVLSVT). The Lumenal segment spans residues 260 to 267 (TESKVESW). Residues 268–288 (FSLIMPFATVIFFVMILDFYV) form a helical membrane-spanning segment. Over 289–303 (DSICSVKMEVSKCAR) the chain is Cytoplasmic. Residues 304-324 (YGSFPIFISALLFGNFWTHPI) form a helical membrane-spanning segment. Residues 325–342 (TDQLRAMNKAAHQESTEH) lie on the Lumenal side of the membrane. The chain crosses the membrane as a helical span at residues 343 to 363 (VLSGGVVVSAIFFILSANILS). The Cytoplasmic segment spans residues 364–418 (SPSKRGQKGTLIGYSPEGTPLYNFMGDAFQHSSQSIPRFIKESLKQILEESDSRQ). Residues 419–439 (IFYFLCLNLLFTFVELFYGVL) traverse the membrane as a helical segment. Positions 420-640 (FYFLCLNLLF…ILIFLSVVPL (221 aa)) are mediates homodimerization with SLC30A6. The Lumenal segment spans residues 440 to 448 (TNSLGLISD). The helical transmembrane segment at 449 to 469 (GFHMLFDCSALVMGLFAALMS) threads the bilayer. Zn(2+)-binding residues include His-451 and Asp-455. Residues 470 to 483 (RWKATRIFSYGYGR) lie on the Cytoplasmic side of the membrane. The helical transmembrane segment at 484 to 504 (IEILSGFINGLFLIVIAFFVF) threads the bilayer. Residues 505 to 520 (MESVARLIDPPELDTH) are Lumenal-facing. A helical transmembrane segment spans residues 521–541 (MLTPVSVGGLIVNLIGICAFS). The interval 542-578 (HAHSHAHGASQGSCHSSDHSHSHHMHGHSDHGHGHSH) is his-rich loop; required for zinc transport. Residues 542-592 (HAHSHAHGASQGSCHSSDHSHSHHMHGHSDHGHGHSHGSAGGGMNANMRGV) lie on the Cytoplasmic side of the membrane. A disordered region spans residues 551–581 (SQGSCHSSDHSHSHHMHGHSDHGHGHSHGSA). A helical membrane pass occupies residues 593-613 (FLHVLADTLGSIGVIVSTVLI). The Zn(2+) site is built by His-595 and Asp-599. The Lumenal portion of the chain corresponds to 614 to 617 (EQFG). The chain crosses the membrane as a helical span at residues 618–638 (WFIADPLCSLFIAILIFLSVV). At 639-765 (PLIKDACQVL…KYCKDGTYIM (127 aa)) the chain is on the cytoplasmic side.

The protein belongs to the cation diffusion facilitator (CDF) transporter (TC 2.A.4) family. SLC30A subfamily. In terms of assembly, heterodimer with SLC30A6/ZNT6; form a functional zinc ion transmembrane transporter. In terms of processing, could homodimerize through the formation of dityrosine bonds upon oxidative stress. Ubiquitously expressed. Highly expressed in pancreas, liver and kidney. Expressed abundantly in insulin-containing beta cells, undetectable in other endocrine cell types including glucagon-secreting alpha cells and most acinar cells (at protein level).

It is found in the golgi apparatus. It localises to the golgi stack membrane. The protein localises to the cytoplasmic vesicle. Its subcellular location is the COPII-coated vesicle membrane. The protein resides in the secretory vesicle membrane. It is found in the trans-Golgi network membrane. It localises to the endoplasmic reticulum membrane. The protein localises to the cell membrane. Its subcellular location is the apical cell membrane. It catalyses the reaction Zn(2+)(in) + 2 H(+)(out) = Zn(2+)(out) + 2 H(+)(in). Functionally, together with SLC30A6 forms a functional proton-coupled zinc ion antiporter mediating zinc entry into the lumen of organelles along the secretory pathway. By contributing to zinc ion homeostasis within the early secretory pathway, regulates the activation and folding of enzymes like alkaline phosphatases and enzymes involved in phosphatidylinositol glycan anchor biosynthesis. Through the transport of zinc into secretory granules of pancreatic beta-cells, plays an important role in the storage and secretion of insulin. Zinc ion:proton antiporter mediating influx and efflux of zinc at the plasma membrane. The polypeptide is Proton-coupled zinc antiporter SLC30A5 (Homo sapiens (Human)).